The chain runs to 137 residues: Large ribosomal subunit protein uL16 (137 aa).

Belongs to the universal ribosomal protein uL16 family. Part of the 50S ribosomal subunit.

In terms of biological role, binds 23S rRNA and is also seen to make contacts with the A and possibly P site tRNAs. The polypeptide is Large ribosomal subunit protein uL16 (Cereibacter sphaeroides (strain ATCC 17025 / ATH 2.4.3) (Rhodobacter sphaeroides)).